An 85-amino-acid polypeptide reads, in one-letter code: Neurtoxin 10 (85 aa).

An N-terminal signal peptide occupies residues 1-23 (MKFCVAVSLLIIASMAGVISVSG). One can recognise an LCN-type CS-alpha/beta domain in the interval 24 to 85 (YDVYPRDYAE…NFLSVIWKHC (62 aa)). 3 disulfides stabilise this stretch: Cys-38–Cys-60, Cys-46–Cys-65, and Cys-50–Cys-67.

It belongs to the long (3 C-C) scorpion toxin superfamily. In terms of tissue distribution, expressed by the venom gland.

It localises to the secreted. The chain is Neurtoxin 10 from Lychas mucronatus (Chinese swimming scorpion).